Consider the following 100-residue polypeptide: Large ribosomal subunit protein uL23 (100 aa).

This sequence belongs to the universal ribosomal protein uL23 family. As to quaternary structure, part of the 50S ribosomal subunit. Contacts protein L29, and trigger factor when it is bound to the ribosome.

Its function is as follows. One of the early assembly proteins it binds 23S rRNA. One of the proteins that surrounds the polypeptide exit tunnel on the outside of the ribosome. Forms the main docking site for trigger factor binding to the ribosome. The chain is Large ribosomal subunit protein uL23 from Synechococcus sp. (strain CC9902).